Consider the following 908-residue polypeptide: Probable RNA-directed DNA polymerase from transposon X-element (908 aa).

In terms of domain architecture, Reverse transcriptase spans 481 to 752 (AIVRLQYFPY…NAAKYLGVLL (272 aa)). A disordered region spans residues 883-908 (RPPRRLNRRQPRDLITRSPLTRVRRS).

The cofactor is Mg(2+). Mn(2+) is required as a cofactor.

The enzyme catalyses DNA(n) + a 2'-deoxyribonucleoside 5'-triphosphate = DNA(n+1) + diphosphate. This is Probable RNA-directed DNA polymerase from transposon X-element (X-element\ORF2) from Drosophila melanogaster (Fruit fly).